Here is a 109-residue protein sequence, read N- to C-terminus: Ribulose bisphosphate carboxylase small subunit (109 aa).

This sequence belongs to the RuBisCO small chain family. Heterohexadecamer of 8 large and 8 small subunits.

The protein localises to the carboxysome. Functionally, ruBisCO catalyzes two reactions: the carboxylation of D-ribulose 1,5-bisphosphate, the primary event in carbon dioxide fixation, as well as the oxidative fragmentation of the pentose substrate in the photorespiration process. Both reactions occur simultaneously and in competition at the same active site. Although the small subunit is not catalytic it is essential for maximal activity. The chain is Ribulose bisphosphate carboxylase small subunit from Prochlorothrix hollandica.